Reading from the N-terminus, the 63-residue chain is Putative conjugal transfer lipoprotein XF_a0011.1 (63 aa).

Positions Met-1 to Gly-15 are cleaved as a signal peptide. Cys-16 is lipidated: N-palmitoyl cysteine. The S-diacylglycerol cysteine moiety is linked to residue Cys-16.

The protein to B.suis ORF12 in VirB region.

Its subcellular location is the cell inner membrane. The polypeptide is Putative conjugal transfer lipoprotein XF_a0011.1 (Xylella fastidiosa (strain 9a5c)).